We begin with the raw amino-acid sequence, 184 residues long: uncharacterized protein (184 aa).

This is an uncharacterized protein from Caenorhabditis elegans.